The following is a 163-amino-acid chain: Phosphopantetheine adenylyltransferase (163 aa).

2 residues coordinate ATP: Ser10 and His18. Residue Ser10 coordinates substrate. Residues Lys42, Thr75, and Arg89 each coordinate substrate. ATP is bound by residues 90-92 (GIR), Glu100, and 125-131 (YAHVSSS).

Belongs to the bacterial CoaD family. In terms of assembly, homohexamer. Mg(2+) is required as a cofactor.

Its subcellular location is the cytoplasm. The catalysed reaction is (R)-4'-phosphopantetheine + ATP + H(+) = 3'-dephospho-CoA + diphosphate. Its pathway is cofactor biosynthesis; coenzyme A biosynthesis; CoA from (R)-pantothenate: step 4/5. In terms of biological role, reversibly transfers an adenylyl group from ATP to 4'-phosphopantetheine, yielding dephospho-CoA (dPCoA) and pyrophosphate. The sequence is that of Phosphopantetheine adenylyltransferase from Enterococcus faecalis (strain ATCC 700802 / V583).